A 485-amino-acid polypeptide reads, in one-letter code: NADH-quinone oxidoreductase subunit N (485 aa).

14 helical membrane-spanning segments follow: residues 8–28, 35–55, 75–95, 105–125, 127–147, 159–179, 203–223, 235–255, 271–291, 297–317, 326–346, 374–394, 407–426, and 449–469; these read LIALSPLLIVGLTVVVVMLCI, FVNATMTVIGLNIALLSLYFV, FYTGLVLLASLATSTFAYPWL, FYLLVLIAALGGILLSSANHL, SLFIGIELLSLPLFGLVGYAF, YMLLSAAASSFLLFGMALIYA, LLAGLGMMIVGLGFKLSLVPF, PAPVSTFLATAGKIAVFGAVM, IVLGVIAFASILFGNVMAVSQ, LLGYSSIAHLGYLLVALIAVQ, VGVYLVGYLFSSLGAFGVVSL, AVMTVMMLSLAGIPMTLGFFG, LWWLTGAVVLGSAIGLYYYL, and ALTAGGVVVLISSIAVLFFGL.

Belongs to the complex I subunit 2 family. In terms of assembly, NDH-1 is composed of 13 different subunits. Subunits NuoA, H, J, K, L, M, N constitute the membrane sector of the complex.

The protein resides in the cell inner membrane. It carries out the reaction a quinone + NADH + 5 H(+)(in) = a quinol + NAD(+) + 4 H(+)(out). In terms of biological role, NDH-1 shuttles electrons from NADH, via FMN and iron-sulfur (Fe-S) centers, to quinones in the respiratory chain. The immediate electron acceptor for the enzyme in this species is believed to be ubiquinone. Couples the redox reaction to proton translocation (for every two electrons transferred, four hydrogen ions are translocated across the cytoplasmic membrane), and thus conserves the redox energy in a proton gradient. This chain is NADH-quinone oxidoreductase subunit N, found in Pectobacterium carotovorum subsp. carotovorum (strain PC1).